A 436-amino-acid polypeptide reads, in one-letter code: Trigger factor (436 aa).

In terms of domain architecture, PPIase FKBP-type spans 161 to 246; that stretch reads GDQLNIDFVG…VNSVSAPQLP (86 aa).

It belongs to the FKBP-type PPIase family. Tig subfamily.

It localises to the cytoplasm. It carries out the reaction [protein]-peptidylproline (omega=180) = [protein]-peptidylproline (omega=0). Involved in protein export. Acts as a chaperone by maintaining the newly synthesized protein in an open conformation. Functions as a peptidyl-prolyl cis-trans isomerase. This chain is Trigger factor, found in Ectopseudomonas mendocina (strain ymp) (Pseudomonas mendocina).